We begin with the raw amino-acid sequence, 593 residues long: Putative auxin response factor 15 (593 aa).

The TF-B3 DNA-binding region spans F126–R228. The 82-residue stretch at R511 to R592 folds into the PB1 domain.

It belongs to the ARF family. In terms of assembly, homodimers and heterodimers.

It is found in the nucleus. Auxin response factors (ARFs) are transcriptional factors that bind specifically to the DNA sequence 5'-TGTCTC-3' found in the auxin-responsive promoter elements (AuxREs). Could act as transcriptional activator or repressor. Formation of heterodimers with Aux/IAA proteins may alter their ability to modulate early auxin response genes expression. The polypeptide is Putative auxin response factor 15 (ARF15) (Arabidopsis thaliana (Mouse-ear cress)).